The sequence spans 358 residues: Probable tartrate dehydrogenase/decarboxylase TtuC' (358 aa).

3 residues coordinate Mn(2+): Asp222, Asp246, and Asp250.

This sequence belongs to the isocitrate and isopropylmalate dehydrogenases family. Mg(2+) is required as a cofactor. The cofactor is Mn(2+). Requires K(+) as cofactor.

The protein resides in the cytoplasm. It catalyses the reaction tartrate + NAD(+) = 2-hydroxy-3-oxosuccinate + NADH + H(+). It carries out the reaction (2R,3S)-tartrate + NAD(+) = 2-hydroxy-3-oxosuccinate + NADH + H(+). The enzyme catalyses (2R,3R)-tartrate + NAD(+) = 2-hydroxy-3-oxosuccinate + NADH + H(+). The catalysed reaction is (2R,3R)-tartrate + H(+) = (R)-glycerate + CO2. It catalyses the reaction (R)-malate + NAD(+) = pyruvate + CO2 + NADH. It functions in the pathway carbohydrate acid metabolism; tartrate degradation; 2-hydroxy-3-oxosuccinate from L-tartrate: step 1/1. It participates in carbohydrate acid metabolism; tartrate degradation; 2-hydroxy-3-oxosuccinate from meso-tartrate: step 1/1. The protein operates within carbohydrate acid metabolism; tartrate degradation; D-glycerate from L-tartrate: step 1/1. Its function is as follows. Has multiple catalytic activities. Apart from catalyzing the oxidation of (+)-tartrate to oxaloglycolate, also converts meso-tartrate to D-glycerate and catalyzes the oxidative decarboxylation of D-malate to pyruvate. In Agrobacterium vitis (Rhizobium vitis), this protein is Probable tartrate dehydrogenase/decarboxylase TtuC' (ttuC').